The sequence spans 183 residues: Ran guanine nucleotide release factor (183 aa).

The interval 23-66 (ELRQIPDNQEVFAHSQTDQSIIIELLEYQSQVQDADAARYHFED) is interaction with RAN.

This sequence belongs to the MOG1 family. In terms of assembly, monomer. Interacts with ran.

The protein resides in the nucleus. It localises to the cytoplasm. The protein localises to the perinuclear region. Its subcellular location is the cell membrane. In terms of biological role, may regulate the intracellular trafficking of RAN. Promotes guanine nucleotide release from RAN and inhibits binding of new GTP. Plays a role in the regulation of the levels of GTP-bound RAN in the nucleus. Required for normal expression of the ion channel hcn4 and for normal expression of the cardiac transcription factors nkx2.5, gata4 and hand2 during embryonic development. Required for normal embryonic heart development and normal heart rate. The protein is Ran guanine nucleotide release factor of Danio rerio (Zebrafish).